Here is an 810-residue protein sequence, read N- to C-terminus: Venom phosphodiesterase 2 (810 aa).

A signal peptide spans 1–23 (MIQQKVLFISLVAVTLGLGLGLG). In terms of domain architecture, SMB spans 33 to 77 (QSWSCSKLRCGEKRIANVLCSCSDDCLEKKDCCTDYKSICKGETS). Cystine bridges form between Cys37-Cys42, Cys37-Cys54, Cys42-Cys72, Cys52-Cys54, Cys52-Cys65, Cys58-Cys64, Cys65-Cys72, Cys83-Cys129, and Cys91-Cys303. 2 residues coordinate a divalent metal cation: Asp106 and Thr144. Catalysis depends on Thr144, which acts as the AMP-threonine intermediate. Asn175, Asn218, and Asn229 each carry an N-linked (GlcNAc...) asparagine glycan. Lys230 is a binding site for AMP. Residues Asp264, His268, Asp311, and His312 each coordinate a divalent metal cation. His268 provides a ligand contact to AMP. 6 disulfide bridges follow: Cys319/Cys416, Cys367/Cys752, Cys500/Cys558, Cys513/Cys613, Cys515/Cys598, and Cys721/Cys731. The N-linked (GlcNAc...) asparagine glycan is linked to Asn364. His421 is a binding site for a divalent metal cation. N-linked (GlcNAc...) asparagine glycosylation is found at Asn471, Asn553, Asn633, and Asn704.

The protein belongs to the nucleotide pyrophosphatase/phosphodiesterase family. In terms of assembly, monomer cleaved in two subunits; disulfide-linked. Is synthesized as a single-chain protein and is subsequently cleaved to form a two-subunit protein held together with disulfide bonds. A divalent metal cation is required as a cofactor. As to expression, expressed by venom gland.

The protein resides in the secreted. It catalyses the reaction ADP + H2O = AMP + phosphate + H(+). Hydrolyzes ADP with high activity. Shows weak or no activity on 5'-AMP, 5'-GMP, 3'-AMP, ATP, cAMP, and cGMP. Is devoid of monophosphatase and proteinase activities. Dose-dependently inhibits platelet aggregation induced by ADP (IC(50)=0.99 uM) and collagen (IC(50)=1.4 uM). This chain is Venom phosphodiesterase 2, found in Crotalus adamanteus (Eastern diamondback rattlesnake).